A 581-amino-acid polypeptide reads, in one-letter code: Myoneurin (581 aa).

The 66-residue stretch at 24 to 89 (CDCTIVIGEF…IYTGTLNLDS (66 aa)) folds into the BTB domain. The disordered stretch occupies residues 167 to 193 (PKQGALAKKSSQTKKKKKAFNSQKTGQ). 2 consecutive short sequence motifs (nuclear localization signal) follow at residues 174 to 190 (KKSS…NSQK) and 256 to 261 (KRKRGK). Position 288 is a phosphoserine (Ser288). C2H2-type zinc fingers lie at residues 301-323 (PMCN…MRIH), 329-351 (YVCH…VRTH), 357-380 (YKCE…RMHH), 386-408 (YKCD…ARKH), 414-436 (YVCD…VRRH), 442-464 (YVCD…SRKH), and 470-493 (FICE…TKVH).

It belongs to the krueppel C2H2-type zinc-finger protein family.

It localises to the nucleus. The sequence is that of Myoneurin (MYNN) from Bos taurus (Bovine).